A 169-amino-acid polypeptide reads, in one-letter code: Chorismate pyruvate-lyase (169 aa).

4 residues coordinate substrate: methionine 37, arginine 79, leucine 117, and glutamate 158.

The protein belongs to the UbiC family. As to quaternary structure, monomer.

It localises to the cytoplasm. It carries out the reaction chorismate = 4-hydroxybenzoate + pyruvate. It participates in cofactor biosynthesis; ubiquinone biosynthesis. Its function is as follows. Removes the pyruvyl group from chorismate, with concomitant aromatization of the ring, to provide 4-hydroxybenzoate (4HB) for the ubiquinone pathway. The sequence is that of Chorismate pyruvate-lyase from Proteus mirabilis (strain HI4320).